The following is a 130-amino-acid chain: Small ribosomal subunit protein uS9 (130 aa).

It belongs to the universal ribosomal protein uS9 family.

This Tolumonas auensis (strain DSM 9187 / NBRC 110442 / TA 4) protein is Small ribosomal subunit protein uS9.